The chain runs to 6885 residues: Nesprin-2 (6885 aa).

The actin-binding stretch occupies residues 1–286 (MASSPELPTE…YVAQFLQYSK (286 aa)). The Cytoplasmic portion of the chain corresponds to 1–6834 (MASSPELPTE…QRSFLSRVVR (6834 aa)). 2 Calponin-homology (CH) domains span residues 31 to 136 (DTQK…LHFH) and 181 to 286 (MSAR…QYSK). Spectrin repeat units follow at residues 297–378 (GKVK…HQIN), 379–472 (AWKI…RINN), 473–575 (ILEK…KNIY), 576–680 (NVKS…KQDQ), 735–838 (VAKD…KNLT), 839–932 (DVSP…LHHE), and 933–1034 (LSLY…KCAS). A coiled-coil region spans residues 297–6782 (GKVKDAMGWL…PASPLPSFDE (6486 aa)). The residue at position 841 (serine 841) is a Phosphoserine. Lysine 955 is modified (N6-acetyllysine). Residues 1042–1059 (PTAGGTSKNEGTITTSEN) are compositionally biased toward polar residues. Residues 1042–1084 (PTAGGTSKNEGTITTSENRGGDPHSEAPFAKSDNQPSTEKAME) are disordered. Spectrin repeat units follow at residues 1121-1212 (TYRD…TLNT), 1263-1323 (NIQD…DTLK), 1324-1419 (ALED…YGVQ), 1420-1524 (EEFT…ALVT), 1525-1636 (ECLE…KTED), 1637-1738 (YYEN…TGES), 1739-1830 (NCHA…TKKS), 1831-1938 (VLQD…AKEL), 1939-2036 (EDSL…EEED), 2037-2132 (KLLP…LAST), 2133-2243 (YLSH…SVQN), and 2244-2360 (LDGH…LNSI). Positions 2368 to 2382 (EKKGKFTLPGREKQA) are enriched in basic and acidic residues. Residues 2368–2394 (EKKGKFTLPGREKQATSDVQESTQESA) form a disordered region. Polar residues predominate over residues 2383–2393 (TSDVQESTQES). Spectrin repeat units lie at residues 2432–2513 (DERK…TLKK), 2514–2620 (NKES…KYSQ), 2621–2717 (QVVE…ETLE), 2718–2831 (PLHL…QLEF), 2832–2933 (KLEE…FIQN), 2934–3036 (TCNE…EKIK), 3037–3142 (QLDT…NMVL), 3143–3248 (ELSP…DLRT), 3249–3352 (NVLN…AQET), 3353–3465 (EAER…MWCE), 3466–3573 (ELKQ…KVQK), 3574–3679 (NKEL…SNEV), 3680–3777 (LKSS…ECRT), 3778–3880 (SQLN…KIME), 3881–3986 (SLPQ…VTQE), and 3987–4086 (QNEL…LPAV). Position 2781 is a phosphoserine (serine 2781). 2 stretches are compositionally biased toward basic and acidic residues: residues 4073–4083 (QEQEGVERDRL) and 4093–4102 (VAERDASERK). Disordered stretches follow at residues 4073-4162 (QEQE…SGTI), 4184-4232 (DSLN…KTRP), 4335-4363 (EKHSEDQHPTILKKSSEPEHQEALQPVNL), and 4416-4448 (HDNDTTQESSASNQASSPENDVPDSILSPQGQN). Serine 4108 carries the phosphoserine modification. Basic and acidic residues-rich tracts occupy residues 4122–4134 (SSVKSDNGDEKAE) and 4144–4155 (WKHDKDMEEDRA). The stretch at 4229–4348 (KTRPEPTEVL…EDQHPTILKK (120 aa)) is one Spectrin 36 repeat. Basic and acidic residues predominate over residues 4335–4356 (EKHSEDQHPTILKKSSEPEHQE). A compositionally biased stretch (polar residues) spans 4421–4434 (TQESSASNQASSPE). Spectrin repeat units follow at residues 4520–4639 (NMTE…RSYQ), 4640–4727 (NEIK…RARY), 4728–4837 (TELS…QSLL), 4838–4943 (QKWE…QALL), 4944–5051 (KHLL…QEKL), 5052–5164 (HQLQ…KIQH), 5165–5266 (LEQL…TQVN), 5267–5391 (QLKT…KAYS), 5392–5487 (NAHG…MLLV), 5488–5589 (KANE…CSEL), 5590–5704 (QGIG…QWQD), 5705–5799 (FTTS…PQLA), 5800–5907 (EMIK…RVAI), 5908–6017 (RKQE…VKKL), 6018–6135 (KETF…EETW), 6136–6243 (RLWQ…LRHF), and 6244–6355 (TNQR…PGLE). The residue at position 5785 (serine 5785) is a Phosphoserine. A compositionally biased stretch (acidic residues) spans 6354 to 6367 (LEDEKEASENETDM). The segment at 6354–6508 (LEDEKEASEN…GTDGGKEGPR (155 aa)) is disordered. 7 positions are modified to phosphoserine: serine 6361, serine 6384, serine 6411, serine 6428, serine 6429, serine 6430, and serine 6459. Basic and acidic residues predominate over residues 6368–6384 (EDPREIQTDSWRKRGES). Spectrin repeat units follow at residues 6461-6549 (SCPE…KLKI), 6550-6665 (KQNL…QCQD), and 6666-6782 (FHQL…SFDE). Basic and acidic residues predominate over residues 6463–6474 (PEHHYKQMEGDR). The segment covering 6477–6489 (PPVPPASSTPYKP) has biased composition (pro residues). Positions 6490-6499 (PYGKLLLPPG) are enriched in low complexity. Positions 6769 to 6824 (GTQNPASPLPSFDEVDSGDQPPATSVPAPRAKQFRAVRTTEGEEETESRVPGSTRP) are disordered. The 60-residue stretch at 6826–6885 (RSFLSRVVRAALPLQLLLLLLLLLACLLPSSEEDYSCTQANNFARSFYPMLRYTNGPPPT) folds into the KASH domain. A helical; Anchor for type IV membrane protein transmembrane segment spans residues 6835–6855 (AALPLQLLLLLLLLLACLLPS). At 6856-6885 (SEEDYSCTQANNFARSFYPMLRYTNGPPPT) the chain is on the perinuclear space side. Residues 6872–6885 (FYPMLRYTNGPPPT) are sufficient for interaction with SUN2.

This sequence belongs to the nesprin family. Core component of LINC complexes which are composed of inner nuclear membrane SUN domain-containing proteins coupled to outer nuclear membrane KASH domain-containing nesprins. SUN and KASH domain-containing proteins seem to bind each other promiscuously; however, some LINC complex constituents are tissue- or cell type-specific. At least SUN1/2-containing core LINC complexes are proposed to be hexameric composed of three protomers of each KASH and SUN domain-containing protein. The SUN2:SYNE2/KASH2 complex is a heterohexamer; the homotrimeric cloverleave-like conformation of the SUN domain is a prerequisite for LINC complex formation in which three separate SYNE2/KASH2 peptides bind at the interface of adjacent SUN domains. Interacts with EMD, LMNA, MKS3 and F-actin via its N-terminal domain. Interacts with DCTN1 and DYNC1I1/2; suggesting the association with the dynein-dynactin motor complex. Associates with kinesin motor complexes. Interacts with TMEM67. Interacts (via KASH domain) with TMEM258. Interacts with BROX; this interaction promotes SYN2 ubiquitination and facilitates the relaxation of mechanical stress imposed by compressive actin fibers at the rupture site. In terms of processing, the disulfid bond with SUN2 is required for stability of the SUN2:SYNE2/KASH2 LINC complex under tensile forces though not required for the interaction. Post-translationally, ubiquitinated, targeting it for degradation. Widely expressed, with higher level in kidney, adult and fetal liver, stomach and placenta. Weakly expressed in skeletal muscle and brain. Isoform 5 is highly expressed in pancreas, skeletal muscle and heart.

The protein localises to the nucleus outer membrane. Its subcellular location is the sarcoplasmic reticulum membrane. It is found in the cell membrane. The protein resides in the cytoplasm. It localises to the cytoskeleton. The protein localises to the mitochondrion. Its subcellular location is the nucleus. It is found in the nucleoplasm. The protein resides in the myofibril. It localises to the sarcomere. The protein localises to the z line. Its subcellular location is the cell junction. It is found in the focal adhesion. In terms of biological role, multi-isomeric modular protein which forms a linking network between organelles and the actin cytoskeleton to maintain the subcellular spatial organization. As a component of the LINC (LInker of Nucleoskeleton and Cytoskeleton) complex involved in the connection between the nuclear lamina and the cytoskeleton. The nucleocytoplasmic interactions established by the LINC complex play an important role in the transmission of mechanical forces across the nuclear envelope and in nuclear movement and positioning. Specifically, SYNE2 and SUN2 assemble in arrays of transmembrane actin-associated nuclear (TAN) lines which are bound to F-actin cables and couple the nucleus to retrograde actin flow during actin-dependent nuclear movement. May be involved in nucleus-centrosome attachment. During interkinetic nuclear migration (INM) at G2 phase and nuclear migration in neural progenitors its LINC complex association with SUN1/2 and probable association with cytoplasmic dynein-dynactin motor complexes functions to pull the nucleus toward the centrosome; SYNE1 and SYNE2 may act redundantly. During INM at G1 phase mediates respective LINC complex association with kinesin to push the nucleus away from the centrosome. Involved in nuclear migration in retinal photoreceptor progenitors. Required for centrosome migration to the apical cell surface during early ciliogenesis. Facilitates the relaxation of mechanical stress imposed by compressive actin fibers at the rupture site through its nteraction with SYN2. The sequence is that of Nesprin-2 from Homo sapiens (Human).